The chain runs to 369 residues: Small ribosomal subunit biogenesis GTPase RsgA (369 aa).

Residues 116–271 (GEQLIAANLD…LIDNPGIREI (156 aa)) enclose the CP-type G domain. GTP-binding positions include 161–164 (NKID) and 213–221 (GSSGVGKST). Zn(2+)-binding residues include C294, C299, H301, and C307.

Belongs to the TRAFAC class YlqF/YawG GTPase family. RsgA subfamily. Monomer. Associates with 30S ribosomal subunit, binds 16S rRNA. Requires Zn(2+) as cofactor.

It is found in the cytoplasm. Functionally, one of several proteins that assist in the late maturation steps of the functional core of the 30S ribosomal subunit. Helps release RbfA from mature subunits. May play a role in the assembly of ribosomal proteins into the subunit. Circularly permuted GTPase that catalyzes slow GTP hydrolysis, GTPase activity is stimulated by the 30S ribosomal subunit. The polypeptide is Small ribosomal subunit biogenesis GTPase RsgA (Methanosarcina acetivorans (strain ATCC 35395 / DSM 2834 / JCM 12185 / C2A)).